We begin with the raw amino-acid sequence, 2193 residues long: Genome polyprotein (2193 aa).

The tract at residues Met1 to Gly22 is disordered. A lipid anchor (N-myristoyl glycine; by host) is attached at Gly2. Topologically, residues Gly2 to Gln1503 are cytoplasmic. The tract at residues Arg568 to Ala588 is amphipathic alpha-helix. Active-site for protease 2A activity residues include His883 and Asp901. Zn(2+)-binding residues include Cys918 and Cys920. Catalysis depends on Cys972, which acts as the For protease 2A activity. Positions 978 and 980 each coordinate Zn(2+). Residues Glu1216–Ala1374 form the SF3 helicase domain. Gly1240 to Ser1247 contacts ATP. Positions 1381, 1392, and 1397 each coordinate Zn(2+). The C4-type; degenerate zinc-finger motif lies at Cys1381–Cys1397. An intramembrane segment occupies Ser1504–Tyr1519. At Lys1520–Phe2193 the chain is on the cytoplasmic side. Residue Tyr1529 is modified to O-(5'-phospho-RNA)-tyrosine. Residues Gly1549 to Phe1727 form the Peptidase C3 domain. Active-site for protease 3C activity residues include His1588, Glu1619, and Cys1695. The RdRp catalytic domain maps to Gly1958–Leu2073. Mg(2+)-binding residues include Asp1964 and Asp2060.

The protein belongs to the picornaviruses polyprotein family. In terms of assembly, interacts with capsid protein VP1 and capsid protein VP3 to form heterotrimeric protomers. As to quaternary structure, interacts with capsid protein VP0, and capsid protein VP3 to form heterotrimeric protomers. Five protomers subsequently associate to form pentamers which serve as building blocks for the capsid. Interacts with capsid protein VP2, capsid protein VP3 and capsid protein VP4 following cleavage of capsid protein VP0. Interacts with host SCARB2. Interacts with host ARF6; this interaction mediates viral endocytosis. Interacts with capsid protein VP1 and capsid protein VP3 in the mature capsid. Interacts with host SCARB2. In terms of assembly, interacts with capsid protein VP0 and capsid protein VP1 to form heterotrimeric protomers. Five protomers subsequently associate to form pentamers which serve as building blocks for the capsid. Interacts with capsid protein VP4 in the mature capsid. Interacts with protein 2C; this interaction may be important for virion morphogenesis. As to quaternary structure, interacts with capsid protein VP1 and capsid protein VP3. Homodimer. In terms of assembly, interacts with host BAX; this interaction activates the mitochondrial apoptotic pathway. Interacts with host ILF2. As to quaternary structure, homohexamer; forms a hexameric ring structure with 6-fold symmetry characteristic of AAA+ ATPases. Interacts (via N-terminus) with host RTN3 (via reticulon domain); this interaction is important for viral replication. Interacts with capsid protein VP3; this interaction may be important for virion morphogenesis. Interacts with protein 3CD. In terms of assembly, homodimer. Interacts with host GBF1. Interacts (via GOLD domain) with host ACBD3 (via GOLD domain); this interaction allows the formation of a viral protein 3A/ACBD3 heterotetramer with a 2:2 stoichiometry, which will stimulate the recruitment of host PI4KB in order to synthesize PI4P at the viral RNA replication sites. As to quaternary structure, interacts with RNA-directed RNA polymerase. Interacts with host IFIH1/MDA5; this interaction inhibits host IFIH1. In terms of assembly, interacts with protein 3AB and with RNA-directed RNA polymerase. As to quaternary structure, interacts with Viral protein genome-linked and with protein 3CD. The cofactor is Mg(2+). Post-translationally, specific enzymatic cleavages in vivo by the viral proteases yield processing intermediates and the mature proteins. Myristoylation is required for the formation of pentamers during virus assembly. Further assembly of 12 pentamers and a molecule of genomic RNA generates the provirion. In terms of processing, during virion maturation, immature virions are rendered infectious following cleavage of VP0 into VP4 and VP2. This maturation seems to be an autocatalytic event triggered by the presence of RNA in the capsid and it is followed by a conformational change infectious virion. Post-translationally, myristoylation is required during RNA encapsidation and formation of the mature virus particle. VPg is uridylylated by the polymerase into VPg-pUpU. This acts as a nucleotide-peptide primer for the genomic RNA replication.

It is found in the virion. Its subcellular location is the host cytoplasm. It localises to the host cytoplasmic vesicle membrane. The protein localises to the host nucleus. The enzyme catalyses a ribonucleoside 5'-triphosphate + H2O = a ribonucleoside 5'-diphosphate + phosphate + H(+). It catalyses the reaction Selective cleavage of Tyr-|-Gly bond in the picornavirus polyprotein.. The catalysed reaction is RNA(n) + a ribonucleoside 5'-triphosphate = RNA(n+1) + diphosphate. It carries out the reaction Selective cleavage of Gln-|-Gly bond in the poliovirus polyprotein. In other picornavirus reactions Glu may be substituted for Gln, and Ser or Thr for Gly.. Replication or transcription is subject to high level of random mutations by the nucleotide analog ribavirin. Its function is as follows. Forms an icosahedral capsid of pseudo T=3 symmetry with capsid proteins VP2 and VP3. The capsid is 300 Angstroms in diameter, composed of 60 copies of each capsid protein and enclosing the viral positive strand RNA genome. Capsid protein VP1 mainly forms the vertices of the capsid. Capsid protein VP1, together with VP2, interacts with host cell receptor SCARB2 to provide virion attachment to target host cells. This attachment induces virion internalization. After binding to its receptor, the capsid undergoes conformational changes. Capsid protein VP1 N-terminus (that contains an amphipathic alpha-helix) and capsid protein VP4 are externalized. Together, they shape a pore in the host membrane through which viral genome is translocated to host cell cytoplasm. Forms an icosahedral capsid of pseudo T=3 symmetry with capsid proteins VP2 and VP3. The capsid is 300 Angstroms in diameter, composed of 60 copies of each capsid protein and enclosing the viral positive strand RNA genome. Capsid protein VP2, together with VP1, interacts with host cell receptor SCARB2 to provide virion attachment to target host cells. In terms of biological role, forms an icosahedral capsid of pseudo T=3 symmetry with capsid proteins VP2 and VP3. The capsid is 300 Angstroms in diameter, composed of 60 copies of each capsid protein and enclosing the viral positive strand RNA genome. Functionally, lies on the inner surface of the capsid shell. After binding to the host receptor, the capsid undergoes conformational changes. Capsid protein VP4 is released, Capsid protein VP1 N-terminus is externalized, and together, they shape a pore in the host membrane through which the viral genome is translocated into the host cell cytoplasm. Its function is as follows. Component of immature procapsids, which is cleaved into capsid proteins VP4 and VP2 after maturation. Allows the capsid to remain inactive before the maturation step. Cysteine protease that cleaves viral polyprotein and specific host proteins. It is responsible for the autocatalytic cleavage between the P1 and P2 regions, which is the first cleavage occurring in the polyprotein. Also cleaves the host translation initiation factor EIF4G1, in order to shut down the capped cellular mRNA translation. Inhibits the host nucleus-cytoplasm protein and RNA trafficking by cleaving host members of the nuclear pores. Counteracts stress granule formation probably by antagonizing its assembly or promoting its dissassembly. Cleaves and inhibits host IFIH1/MDA5, thereby inhibiting the type-I IFN production and the establishment of the antiviral state. Cleaves and inhibits host MAVS, thereby inhibiting the type-I IFN production and the establishment of the antiviral state. In terms of biological role, plays an essential role in the virus replication cycle by acting as a viroporin. Creates a pore in the host endoplasmic reticulum and as a consequence releases Ca2+ in the cytoplasm of infected cell. In turn, high levels of cytoplasmic calcium may trigger membrane trafficking and transport of viral ER-associated proteins to viroplasms, sites of viral genome replication. Functionally, induces and associates with structural rearrangements of intracellular membranes. Displays RNA-binding, nucleotide binding and NTPase activities. May play a role in virion morphogenesis and viral RNA encapsidation by interacting with the capsid protein VP3. Its function is as follows. Localizes the viral replication complex to the surface of membranous vesicles. Together with protein 3CD binds the Cis-Active RNA Element (CRE) which is involved in RNA synthesis initiation. Acts as a cofactor to stimulate the activity of 3D polymerase, maybe through a nucleid acid chaperone activity. Localizes the viral replication complex to the surface of membranous vesicles. It inhibits host cell endoplasmic reticulum-to-Golgi apparatus transport and causes the disassembly of the Golgi complex, possibly through GBF1 interaction. This would result in depletion of MHC, trail receptors and IFN receptors at the host cell surface. Plays an essential role in viral RNA replication by recruiting ACBD3 and PI4KB at the viral replication sites, thereby allowing the formation of the rearranged membranous structures where viral replication takes place. In terms of biological role, acts as a primer for viral RNA replication and remains covalently bound to viral genomic RNA. VPg is uridylylated prior to priming replication into VPg-pUpU. The oriI viral genomic sequence may act as a template for this. The VPg-pUpU is then used as primer on the genomic RNA poly(A) by the RNA-dependent RNA polymerase to replicate the viral genome. During genome replication, the VPg-RNA linkage is removed by the host TDP2, thereby accelerating replication. During the late stage of the replication cycle, host TDP2 is excluded from sites of viral RNA synthesis and encapsidation, allowing for the generation of progeny virions. Functionally, involved in the viral replication complex and viral polypeptide maturation. It exhibits protease activity with a specificity and catalytic efficiency that is different from protease 3C. Protein 3CD lacks polymerase activity. Protein 3CD binds to the 5'UTR of the viral genome. Its function is as follows. Major viral protease that mediates proteolytic processing of the polyprotein. Cleaves host EIF5B, contributing to host translation shutoff. Also cleaves host PABPC1, contributing to host translation shutoff. Disassembles host cytoplasmic stress granules by cleaving host G3BP1, although this effect is less prononced than the inhibition induced by protease 2A. Cleaves host RIGI and thus contributes to the inhibition of type I interferon production. Cleaves host IRF7 and thus contributes to the inhibition of type I interferon production. Cleaves host HNRNPA1 thereby increasing the translation of apoptosis protease activating factor APAF1, leading to apoptosis of the host cell. Cleaves host NLRP1, triggers host N-glycine-mediated degradation of the autoinhibitory NLRP1 N-terminal fragment. Replicates the viral genomic RNA on the surface of intracellular membranes. May form linear arrays of subunits that propagate along a strong head-to-tail interaction called interface-I. Covalently attaches UMP to a tyrosine of VPg, which is used to prime RNA synthesis. The positive stranded RNA genome is first replicated at virus induced membranous vesicles, creating a dsRNA genomic replication form. This dsRNA is then used as template to synthesize positive stranded RNA genomes. ss(+)RNA genomes are either translated, replicated or encapsidated. This is Genome polyprotein from Human enterovirus 71 (strain 7423/MS/87) (EV71).